The primary structure comprises 1551 residues: Transient receptor potential cation channel subfamily M member-like 2 (1551 aa).

The Cytoplasmic segment spans residues 1–714 (MGKDSFTPLY…WMGTMAMNTR (714 aa)). An intramembrane segment occupies 715 to 730 (WWKVLVCLYLPVLIFP). Residues 731–837 (IIYFVPDEQH…DRIMHFYSAP (107 aa)) lie on the Cytoplasmic side of the membrane. The interval 744 to 767 (AAEREHQKSLNQKSSKVKSHKEKN) is disordered. A helical membrane pass occupies residues 838–858 (FSKFVGNVVGYLAFIFLYAYV). Residues 859-877 (VLFNFPRFDPAKTLGGIHP) lie on the Extracellular side of the membrane. A helical transmembrane segment spans residues 878 to 898 (TEIVLYFWVFTILIEEIRQLA). Ca(2+) contacts are provided by Glu893 and Gln896. Residues 899-916 (AKPPKYIKDKVSVYFSDT) are Cytoplasmic-facing. Residues 917 to 937 (WNFVDIFSLTVFIIAIILRFF) form a helical membrane-spanning segment. Ca(2+) contacts are provided by Asn918 and Asp921. The Extracellular segment spans residues 938–947 (TNSRIFTASR). Residues 948 to 968 (IILSLDIIFFIVRSLQIFSVN) traverse the membrane as a helical segment. At 969–980 (RLLGPKLVMIQK) the chain is on the cytoplasmic side. Residues 981–1001 (MMQDLAQFIIILAVFTIAYGI) traverse the membrane as a helical segment. Topologically, residues 1002-1018 (ALHAVMFPSPGIYARNN) are extracellular. Asn1017 carries an N-linked (GlcNAc...) asparagine glycan. Positions 1019 to 1034 (TWVTITSVVQYPYWQM) form an intramembrane region, pore-forming. The short motif at 1035 to 1037 (YGE) is the Selectivity filter element. Residues 1035–1059 (YGELFLDEIQGEKPKEFGEVDPDGR) are Extracellular-facing. Residues 1040–1042 (LDE) carry the Prevents fast channel inactivation motif. The chain crosses the membrane as a helical span at residues 1060–1080 (WLSPLLLAIYMVFTNILLLNL). Over 1081–1116 (LIAIFNYTFERVQEDSDKVWKFQRYDLVQEYHSRPV) the chain is Cytoplasmic. The stretch at 1117-1135 (FAPPLVLLGHILIFIRWVW) is an intramembrane region. The Cytoplasmic portion of the chain corresponds to 1136–1551 (RMCRCGHPPR…KVAKMRDAAF (416 aa)). Positions 1184 to 1209 (LEERVRALGDRVDCINSQLNRVLDSM) form a coiled coil. Residues 1394 to 1546 (WKRTSAGVML…VSILEKVAKM (153 aa)) enclose the Nudix hydrolase domain. The Nudix box motif lies at 1428–1449 (GMVEPGQLVTQALKAEFGEEAM).

The protein belongs to the transient receptor (TC 1.A.4) family. LTrpC subfamily. TRPM2 sub-subfamily. As to quaternary structure, homotetramer.

It is found in the cell membrane. Activated by phosphatidylinositol 4,5-bisphosphate (PIP2). Although PIP2 is essential for the channel activation, its contribution to the level of channel activity is minimal. Also activated by diphosphate ribose-2'-phosphate. Upon binding to ADPR, channel activation requires only a short initial cytosolic Ca(2+) increase, then the activation is sustained by the uptake of extracellular Ca(2+). Activated by 2-aminoethyl diphenylborinate (2-APB) in a Ca(2+)-dependent manner. 2-APB prevents the inactivation of the channel. Its function is as follows. Nonselective, voltage-independent cation channel that mediates Ca(2+) and to a lesser extent Na(+) influx, leading to increased cytoplasmic Ca(2+) levels. Functions as a ligand-gated ion channel. Binding of ADP-ribose causes a conformation change; the channel is primed but still requires Ca(2+) binding to trigger channel opening. May have ADP-ribose pyrophosphatase activity which reduces ADP-ribose levels induced by oxidative stress, thus preventing the channel activation by reactive oxygen species. This chain is Transient receptor potential cation channel subfamily M member-like 2, found in Nematostella vectensis (Starlet sea anemone).